Consider the following 233-residue polypeptide: Orotidine 5'-phosphate decarboxylase (233 aa).

Substrate-binding positions include D11, K34, 61 to 70, T117, R179, Q189, G209, and R210; that span reads DLKLHDIPNT. K63 (proton donor) is an active-site residue.

The protein belongs to the OMP decarboxylase family. Type 1 subfamily. In terms of assembly, homodimer.

It carries out the reaction orotidine 5'-phosphate + H(+) = UMP + CO2. It functions in the pathway pyrimidine metabolism; UMP biosynthesis via de novo pathway; UMP from orotate: step 2/2. Catalyzes the decarboxylation of orotidine 5'-monophosphate (OMP) to uridine 5'-monophosphate (UMP). The chain is Orotidine 5'-phosphate decarboxylase from Streptococcus agalactiae serotype V (strain ATCC BAA-611 / 2603 V/R).